Consider the following 208-residue polypeptide: MKVVEVKHPLVRHKIGLMREGDISTKRFRELAAEVGSLLTYEATADFETETVTIEGWNGPVDVDQIKGKKVTVVPILRAGLGMMDGVLEHIPSARISVVGIYRDEETLEPVPYFEKLASDMNERIALIVDPMLATGGSMIATIDLLKKRGCTSIKALVLVAAPEGIKALEAAHPDVELYTAAIDRCLNEKGYILPGLGDAGDKIFGTK.

5-phospho-alpha-D-ribose 1-diphosphate-binding positions include Arg78, Arg103, and 130–138; that span reads DPMLATGGS. Uracil-binding positions include Ile193 and 198 to 200; that span reads GDA. Asp199 contributes to the 5-phospho-alpha-D-ribose 1-diphosphate binding site.

Belongs to the UPRTase family. Requires Mg(2+) as cofactor.

It carries out the reaction UMP + diphosphate = 5-phospho-alpha-D-ribose 1-diphosphate + uracil. It participates in pyrimidine metabolism; UMP biosynthesis via salvage pathway; UMP from uracil: step 1/1. Allosterically activated by GTP. In terms of biological role, catalyzes the conversion of uracil and 5-phospho-alpha-D-ribose 1-diphosphate (PRPP) to UMP and diphosphate. The sequence is that of Uracil phosphoribosyltransferase from Shewanella oneidensis (strain ATCC 700550 / JCM 31522 / CIP 106686 / LMG 19005 / NCIMB 14063 / MR-1).